Consider the following 508-residue polypeptide: ATP synthase subunit alpha, chloroplastic (508 aa).

Residue G173–T180 participates in ATP binding.

Belongs to the ATPase alpha/beta chains family. In terms of assembly, F-type ATPases have 2 components, CF(1) - the catalytic core - and CF(0) - the membrane proton channel. CF(1) has five subunits: alpha(3), beta(3), gamma(1), delta(1), epsilon(1). CF(0) has four main subunits: a, b, b' and c.

The protein localises to the plastid. It is found in the chloroplast thylakoid membrane. It catalyses the reaction ATP + H2O + 4 H(+)(in) = ADP + phosphate + 5 H(+)(out). In terms of biological role, produces ATP from ADP in the presence of a proton gradient across the membrane. The alpha chain is a regulatory subunit. This Chara vulgaris (Common stonewort) protein is ATP synthase subunit alpha, chloroplastic.